The chain runs to 312 residues: Malate dehydrogenase (312 aa).

Residues 7 to 13 (GAAGGIG) and Asp-34 contribute to the NAD(+) site. Positions 81 and 87 each coordinate substrate. Residues Asn-94 and 117 to 119 (ITN) contribute to the NAD(+) site. Substrate is bound by residues Asn-119 and Arg-153. The active-site Proton acceptor is the His-177. NAD(+) is bound at residue Met-227.

This sequence belongs to the LDH/MDH superfamily. MDH type 1 family. Homodimer.

It catalyses the reaction (S)-malate + NAD(+) = oxaloacetate + NADH + H(+). Catalyzes the reversible oxidation of malate to oxaloacetate. In Escherichia fergusonii (strain ATCC 35469 / DSM 13698 / CCUG 18766 / IAM 14443 / JCM 21226 / LMG 7866 / NBRC 102419 / NCTC 12128 / CDC 0568-73), this protein is Malate dehydrogenase.